Consider the following 93-residue polypeptide: Cell division topological specificity factor (93 aa).

Belongs to the MinE family.

In terms of biological role, prevents the cell division inhibition by proteins MinC and MinD at internal division sites while permitting inhibition at polar sites. This ensures cell division at the proper site by restricting the formation of a division septum at the midpoint of the long axis of the cell. This chain is Cell division topological specificity factor, found in Halorhodospira halophila (strain DSM 244 / SL1) (Ectothiorhodospira halophila (strain DSM 244 / SL1)).